A 132-amino-acid chain; its full sequence is Small ribosomal subunit protein uS8 (132 aa).

Belongs to the universal ribosomal protein uS8 family. In terms of assembly, part of the 30S ribosomal subunit. Contacts proteins S5 and S12.

Functionally, one of the primary rRNA binding proteins, it binds directly to 16S rRNA central domain where it helps coordinate assembly of the platform of the 30S subunit. The chain is Small ribosomal subunit protein uS8 from Maricaulis maris (strain MCS10) (Caulobacter maris).